Consider the following 717-residue polypeptide: Fatty acid oxidation complex subunit alpha (717 aa).

Residues 1–190 (MIHAGNAITV…KDGAVDAVVA (190 aa)) are enoyl-CoA hydratase/isomerase. Residue Asp-298 coordinates substrate. Residues 313-717 (HPVNQAAVLG…MAANNKKFYG (405 aa)) form a 3-hydroxyacyl-CoA dehydrogenase region. NAD(+) contacts are provided by residues Met-326, Asp-345, 402–404 (VTE), Lys-409, and Ser-431. Catalysis depends on His-452, which acts as the For 3-hydroxyacyl-CoA dehydrogenase activity. Asn-455 contacts NAD(+). Asn-502 contacts substrate.

The protein in the N-terminal section; belongs to the enoyl-CoA hydratase/isomerase family. In the C-terminal section; belongs to the 3-hydroxyacyl-CoA dehydrogenase family. In terms of assembly, heterotetramer of two alpha chains (FadB) and two beta chains (FadA).

The enzyme catalyses a (3S)-3-hydroxyacyl-CoA + NAD(+) = a 3-oxoacyl-CoA + NADH + H(+). It carries out the reaction a (3S)-3-hydroxyacyl-CoA = a (2E)-enoyl-CoA + H2O. The catalysed reaction is a 4-saturated-(3S)-3-hydroxyacyl-CoA = a (3E)-enoyl-CoA + H2O. It catalyses the reaction (3S)-3-hydroxybutanoyl-CoA = (3R)-3-hydroxybutanoyl-CoA. The enzyme catalyses a (3Z)-enoyl-CoA = a 4-saturated (2E)-enoyl-CoA. It carries out the reaction a (3E)-enoyl-CoA = a 4-saturated (2E)-enoyl-CoA. The protein operates within lipid metabolism; fatty acid beta-oxidation. In terms of biological role, involved in the aerobic and anaerobic degradation of long-chain fatty acids via beta-oxidation cycle. Catalyzes the formation of 3-oxoacyl-CoA from enoyl-CoA via L-3-hydroxyacyl-CoA. It can also use D-3-hydroxyacyl-CoA and cis-3-enoyl-CoA as substrate. The chain is Fatty acid oxidation complex subunit alpha from Acinetobacter baumannii (strain ACICU).